Consider the following 376-residue polypeptide: Chorismate synthase ARO2 (376 aa).

S2 carries the N-acetylserine modification. The active site involves H17. Positions 39-61 (IQPQLTRRRPGQSKLSTPRDEKD) are disordered. Residues H104 and D339 contribute to the active site.

It belongs to the chorismate synthase family. Homotetramer.

The catalysed reaction is 5-O-(1-carboxyvinyl)-3-phosphoshikimate = chorismate + phosphate. It catalyses the reaction FMNH2 + NADP(+) = FMN + NADPH + 2 H(+). It functions in the pathway metabolic intermediate biosynthesis; chorismate biosynthesis; chorismate from D-erythrose 4-phosphate and phosphoenolpyruvate: step 7/7. Bifunctional chorismate synthase and flavin reductase that catalyzes the conversion of 5-enolpyruvylshikimate 3-phosphate (EPSP) to form chorismate, which is the last common intermediate in the synthesis of the three aromatic amino acids phenylalanine, tyrosine and tryptophan. Also acts as a flavin reductase (FR) able to generate reduced flavin mononucleotide in the presence of NADPH. This is Chorismate synthase ARO2 from Saccharomyces cerevisiae (strain ATCC 204508 / S288c) (Baker's yeast).